The following is a 72-amino-acid chain: Translation initiation factor IF-1 (72 aa).

The region spanning 1–72 (MAKDDVIEVE…TRGRITYRYK (72 aa)) is the S1-like domain. A Phosphotyrosine modification is found at Tyr60.

The protein belongs to the IF-1 family. Component of the 30S ribosomal translation pre-initiation complex which assembles on the 30S ribosome in the order IF-2 and IF-3, IF-1 and N-formylmethionyl-tRNA(fMet); mRNA recruitment can occur at any time during PIC assembly.

The protein localises to the cytoplasm. Functionally, one of the essential components for the initiation of protein synthesis. Stabilizes the binding of IF-2 and IF-3 on the 30S subunit to which N-formylmethionyl-tRNA(fMet) subsequently binds. Helps modulate mRNA selection, yielding the 30S pre-initiation complex (PIC). Upon addition of the 50S ribosomal subunit IF-1, IF-2 and IF-3 are released leaving the mature 70S translation initiation complex. This chain is Translation initiation factor IF-1, found in Bacillus licheniformis (strain ATCC 14580 / DSM 13 / JCM 2505 / CCUG 7422 / NBRC 12200 / NCIMB 9375 / NCTC 10341 / NRRL NRS-1264 / Gibson 46).